The sequence spans 161 residues: SsrA-binding protein (161 aa).

It belongs to the SmpB family.

It localises to the cytoplasm. Its function is as follows. Required for rescue of stalled ribosomes mediated by trans-translation. Binds to transfer-messenger RNA (tmRNA), required for stable association of tmRNA with ribosomes. tmRNA and SmpB together mimic tRNA shape, replacing the anticodon stem-loop with SmpB. tmRNA is encoded by the ssrA gene; the 2 termini fold to resemble tRNA(Ala) and it encodes a 'tag peptide', a short internal open reading frame. During trans-translation Ala-aminoacylated tmRNA acts like a tRNA, entering the A-site of stalled ribosomes, displacing the stalled mRNA. The ribosome then switches to translate the ORF on the tmRNA; the nascent peptide is terminated with the 'tag peptide' encoded by the tmRNA and targeted for degradation. The ribosome is freed to recommence translation, which seems to be the essential function of trans-translation. The polypeptide is SsrA-binding protein (Desulforamulus reducens (strain ATCC BAA-1160 / DSM 100696 / MI-1) (Desulfotomaculum reducens)).